The sequence spans 207 residues: Guanylate kinase (207 aa).

Residues 17 to 197 form the Guanylate kinase-like domain; that stretch reads GRLVVLAGPS…SCDELVSLLV (181 aa). ATP is bound at residue 24 to 31; sequence GPSAVGKS.

This sequence belongs to the guanylate kinase family.

The protein localises to the cytoplasm. It carries out the reaction GMP + ATP = GDP + ADP. In terms of biological role, essential for recycling GMP and indirectly, cGMP. The protein is Guanylate kinase of Rhodococcus jostii (strain RHA1).